A 618-amino-acid polypeptide reads, in one-letter code: tRNA 5-methylaminomethyl-2-thiouridine biosynthesis bifunctional protein MnmC (618 aa).

The interval 1–231 is tRNA (mnm(5)s(2)U34)-methyltransferase; that stretch reads MLQTYAPIDF…KRHMLSAVYE (231 aa). The segment at 256–618 is FAD-dependent cmnm(5)s(2)U34 oxidoreductase; that stretch reads IGAGIAGATT…KDIIRGHLNN (363 aa).

This sequence in the N-terminal section; belongs to the methyltransferase superfamily. tRNA (mnm(5)s(2)U34)-methyltransferase family. The protein in the C-terminal section; belongs to the DAO family. It depends on FAD as a cofactor.

It is found in the cytoplasm. It catalyses the reaction 5-aminomethyl-2-thiouridine(34) in tRNA + S-adenosyl-L-methionine = 5-methylaminomethyl-2-thiouridine(34) in tRNA + S-adenosyl-L-homocysteine + H(+). In terms of biological role, catalyzes the last two steps in the biosynthesis of 5-methylaminomethyl-2-thiouridine (mnm(5)s(2)U) at the wobble position (U34) in tRNA. Catalyzes the FAD-dependent demodification of cmnm(5)s(2)U34 to nm(5)s(2)U34, followed by the transfer of a methyl group from S-adenosyl-L-methionine to nm(5)s(2)U34, to form mnm(5)s(2)U34. The polypeptide is tRNA 5-methylaminomethyl-2-thiouridine biosynthesis bifunctional protein MnmC (Dichelobacter nodosus (strain VCS1703A)).